The primary structure comprises 94 residues: Neutrophil antibiotic peptide NP-2 (94 aa).

An N-terminal signal peptide occupies residues 1–19 (MRTLTLLTALLLLALHTQA). The propeptide occupies 20–62 (KSPQGTAEEAPDQEQLVMEDQDISISFGGDKGTALQDADVKAG). 3 disulfide bridges follow: C65–C93, C67–C82, and C72–C92.

This sequence belongs to the alpha-defensin family. In terms of tissue distribution, highest expression in bone marrow and to a much lesser extent in small intestine.

It localises to the secreted. In terms of biological role, active in vitro against S.aureus, fungi, Gram-positive and Gram-negative bacteria and to a lesser extent against an enveloped virus. The polypeptide is Neutrophil antibiotic peptide NP-2 (Defa) (Rattus norvegicus (Rat)).